A 166-amino-acid polypeptide reads, in one-letter code: NADH-ubiquinone oxidoreductase chain 6 (166 aa).

Helical transmembrane passes span 4-24, 27-47, 50-70, 82-102, 109-129, and 135-155; these read FFSL…VVSA, QGVV…VFLG, FAAL…FGYC, VGGT…LLCL, LLVY…VGVF, and WGLI…LVIL.

This sequence belongs to the complex I subunit 6 family.

Its subcellular location is the mitochondrion membrane. It catalyses the reaction a ubiquinone + NADH + 5 H(+)(in) = a ubiquinol + NAD(+) + 4 H(+)(out). Functionally, core subunit of the mitochondrial membrane respiratory chain NADH dehydrogenase (Complex I) that is believed to belong to the minimal assembly required for catalysis. Complex I functions in the transfer of electrons from NADH to the respiratory chain. The immediate electron acceptor for the enzyme is believed to be ubiquinone. This is NADH-ubiquinone oxidoreductase chain 6 (MT-ND6) from Lycodon semicarinatus (Ryukyu odd-tooth snake).